The chain runs to 283 residues: Extracellular metalloprotease MGG_08041 (283 aa).

A signal peptide spans 1-22 (MQINVVKTFLFALAASSVSALA). Residue asparagine 55 is glycosylated (N-linked (GlcNAc...) asparagine). A Zn(2+)-binding site is contributed by histidine 197. Glutamate 198 is an active-site residue. Position 201 (histidine 201) interacts with Zn(2+). Cysteine 233 and cysteine 260 form a disulfide bridge.

This sequence belongs to the peptidase M43B family.

The protein resides in the secreted. In terms of biological role, secreted metalloproteinase that allows assimilation of proteinaceous substrates. This Pyricularia oryzae (strain 70-15 / ATCC MYA-4617 / FGSC 8958) (Rice blast fungus) protein is Extracellular metalloprotease MGG_08041.